Reading from the N-terminus, the 962-residue chain is CRACD-like protein (962 aa).

3 disordered regions span residues 38–102, 131–174, and 212–871; these read GKKK…PESG, NVKM…HDVG, and PAES…QEPV. Residues 46 to 61 show a composition bias toward polar residues; the sequence is PSSTGSSTWKQSQTRN. S92 carries the post-translational modification Phosphoserine. Basic residues predominate over residues 224 to 244; the sequence is AKHKLQVKPRNQRSSKMRRLS. Positions 245-256 are enriched in polar residues; the sequence is SRAQSESLSDLT. Basic and acidic residues predominate over residues 266-278; it reads EKPLLEVSPEERP. Pro residues-rich tracts occupy residues 292 to 303 and 354 to 365; these read EPGPPAPLPPPG and PPSPPEGPPNPG. The span at 407 to 425 shows a compositional bias: low complexity; the sequence is PEGDTTPPETDPAATSEAP. Basic and acidic residues-rich tracts occupy residues 429-440 and 459-480; these read DGPERSVPKEAE and EPER…ERIG. The residue at position 490 (S490) is a Phosphoserine. Residues 503–521 show a composition bias toward low complexity; sequence AAASEGPAASPPLAAAESP. Composition is skewed to basic and acidic residues over residues 536-546, 555-570, 631-642, and 709-728; these read APERPKAERAE, AAPE…ELRG, KLAERGPQDSGD, and YSAE…EEKC. Positions 753-764 are enriched in pro residues; the sequence is PEPLSSKPPLPR. 2 stretches are compositionally biased toward basic and acidic residues: residues 784 to 806 and 844 to 869; these read PGER…RGAE and QEDK…RGQE.

The protein is CRACD-like protein of Homo sapiens (Human).